Reading from the N-terminus, the 421-residue chain is MSKTHLTEQKFSDFALHPKVVEALEKKGFHNCTPIQALALPLTLAGRDVAGQAQTGTGKTMAFLTSTFHYLLSHPAIADRKVNQPRALIMAPTRELAVQIHADAEPLAQATGLKLGLAYGGDGYDKQLKVLESGVDILIGTTGRLIDYAKQNHINLGAIQVVVLDEADRMYDLGFIKDIRWLFRRMPPANQRLNMLFSATLSYRVRELAFEQMNNAEYIEVEPEQKTGHRIKEELFYPSNEEKMRLLQTLIEEEWPDRAIIFANTKHRCEEIWGHLAADGHRVGLLTGDVAQKKRLRILDEFTRGDLDILVATDVAARGLHIPAVTHVFNYDLPDDCEDYVHRIGRTGRAGASGHSISLACEEYALNLPAIETYIGHSIPVSKYNPDALMTDLPKPLRLTRPRTGNGPRRTGAPRNRRRSG.

The Q motif motif lies at 9-37 (QKFSDFALHPKVVEALEKKGFHNCTPIQA). Positions 40–219 (LPLTLAGRDV…FEQMNNAEYI (180 aa)) constitute a Helicase ATP-binding domain. Residue 53 to 60 (AQTGTGKT) participates in ATP binding. The short motif at 165–168 (DEAD) is the DEAD box element. The Helicase C-terminal domain occupies 245-390 (RLLQTLIEEE…VSKYNPDALM (146 aa)). The tract at residues 392-421 (DLPKPLRLTRPRTGNGPRRTGAPRNRRRSG) is disordered. Over residues 402–414 (PRTGNGPRRTGAP) the composition is skewed to low complexity.

This sequence belongs to the DEAD box helicase family. RhlB subfamily. Component of the RNA degradosome, which is a multiprotein complex involved in RNA processing and mRNA degradation.

The protein localises to the cytoplasm. The enzyme catalyses ATP + H2O = ADP + phosphate + H(+). In terms of biological role, DEAD-box RNA helicase involved in RNA degradation. Has RNA-dependent ATPase activity and unwinds double-stranded RNA. The sequence is that of ATP-dependent RNA helicase RhlB from Escherichia fergusonii (strain ATCC 35469 / DSM 13698 / CCUG 18766 / IAM 14443 / JCM 21226 / LMG 7866 / NBRC 102419 / NCTC 12128 / CDC 0568-73).